A 695-amino-acid chain; its full sequence is Elongation factor G 1 (695 aa).

Residues 6 to 284 enclose the tr-type G domain; sequence SKVRNIGISA…AVETYLPCPT (279 aa). Residues 15 to 22, 82 to 86, and 136 to 139 contribute to the GTP site; these read AHIDSGKT, DTPGH, and NKCD.

It belongs to the TRAFAC class translation factor GTPase superfamily. Classic translation factor GTPase family. EF-G/EF-2 subfamily.

The protein localises to the cytoplasm. Its function is as follows. Catalyzes the GTP-dependent ribosomal translocation step during translation elongation. During this step, the ribosome changes from the pre-translocational (PRE) to the post-translocational (POST) state as the newly formed A-site-bound peptidyl-tRNA and P-site-bound deacylated tRNA move to the P and E sites, respectively. Catalyzes the coordinated movement of the two tRNA molecules, the mRNA and conformational changes in the ribosome. The polypeptide is Elongation factor G 1 (Desulfotalea psychrophila (strain LSv54 / DSM 12343)).